The chain runs to 186 residues: MAAVTDVQRLQARVEELERWVYGPGGSRGSRKVADGLVKVQVALGNIASKRERVKVLYKKIEDLIKYLDPEYIDRIALPDASKLQFILAEEQFILSQVALLEQVEALVPMLDSTHIKAVPEHAARLQRLAQIHIQQQDQCVEITEESKALLEEYNKTTMLLSKQFVQWDELLCQLEAAKQVKPVEE.

Ala-2 is subject to N-acetylalanine. The stretch at Gln-135 to Thr-157 forms a coiled coil.

Belongs to the dynactin subunit 3 family. In terms of assembly, subunit of dynactin, a multiprotein complex part of a tripartite complex with dynein and a adapter, such as BICDL1, BICD2 or HOOK3. The dynactin complex is built around ACTR1A/ACTB filament and consists of an actin-related filament composed of a shoulder domain, a pointed end and a barbed end. Its length is defined by its flexible shoulder domain. The soulder is composed of 2 DCTN1 subunits, 4 DCTN2 and 2 DCTN3. The 4 DCNT2 (via N-terminus) bind the ACTR1A filament and act as molecular rulers to determine the length. The pointed end is important for binding dynein-dynactin cargo adapters. Consists of 4 subunits: ACTR10, DCNT4, DCTN5 and DCTN6. The barbed end is composed of a CAPZA1:CAPZB heterodimers, which binds ACTR1A/ACTB filament and dynactin and stabilizes dynactin.

Its subcellular location is the cytoplasm. The protein localises to the cytoskeleton. The protein resides in the microtubule organizing center. It localises to the centrosome. It is found in the chromosome. Its subcellular location is the centromere. The protein localises to the kinetochore. The protein resides in the spindle. It localises to the cleavage furrow. It is found in the midbody. Part of the dynactin complex that activates the molecular motor dynein for ultra-processive transport along microtubules. Together with dynein may be involved in spindle assembly and cytokinesis. In Bos taurus (Bovine), this protein is Dynactin subunit 3 (DCTN3).